A 93-amino-acid polypeptide reads, in one-letter code: Co-chaperonin GroES (93 aa).

The protein belongs to the GroES chaperonin family. Heptamer of 7 subunits arranged in a ring. Interacts with the chaperonin GroEL.

The protein resides in the cytoplasm. Functionally, together with the chaperonin GroEL, plays an essential role in assisting protein folding. The GroEL-GroES system forms a nano-cage that allows encapsulation of the non-native substrate proteins and provides a physical environment optimized to promote and accelerate protein folding. GroES binds to the apical surface of the GroEL ring, thereby capping the opening of the GroEL channel. This is Co-chaperonin GroES from Streptococcus intermedius.